Consider the following 360-residue polypeptide: MFEKFQAAENRYDEINHRLSDPAVIANQDEYKKLMKEHAELEVLVTKYNEYKKLTKEIADAKEMLNEKLDKEFREMVETELKEAQEKLEVLKKEMKILLLPKDPNDERNVIVEIRGGAGGDEAALFAGDLFRMYTRYAERNGWKTEILDSNPTEIGGFKEVVFSIEGNGAYSRLKFESGVHRVQRVPVTEANGRVHTSTVTVAVLPEAEEIDVEINPNDLRIDTYRASGAGGQHINKTDSAIRITHLPTGLVVCCQDQRSQHKNKEKAMKVLRSKLYEMAREQQHNEIAQERKSQVGTGDRSERIRTYNFPQGRVTDHRIGLTLYKIDDILDGDIDEIIDALITTDQASKLANGAEDDED.

Gln233 is subject to N5-methylglutamine. The tract at residues 286-305 (NEIAQERKSQVGTGDRSERI) is disordered.

This sequence belongs to the prokaryotic/mitochondrial release factor family. Post-translationally, methylated by PrmC. Methylation increases the termination efficiency of RF1.

It localises to the cytoplasm. Peptide chain release factor 1 directs the termination of translation in response to the peptide chain termination codons UAG and UAA. In Acetivibrio thermocellus (strain ATCC 27405 / DSM 1237 / JCM 9322 / NBRC 103400 / NCIMB 10682 / NRRL B-4536 / VPI 7372) (Clostridium thermocellum), this protein is Peptide chain release factor 1.